Reading from the N-terminus, the 295-residue chain is F-box only protein 8 (295 aa).

Residues 35-80 form the F-box domain; that stretch reads TWVARYIPQDLLIEILTRLPPKSVMRFKCVSKFWSSLLSSRYFCNR.

In Arabidopsis thaliana (Mouse-ear cress), this protein is F-box only protein 8 (FBX8).